We begin with the raw amino-acid sequence, 146 residues long: Leghemoglobin alpha (146 aa).

The region spanning 3–146 is the Globin domain; it reads AFTEKQEALV…LAAAIKKAYA (144 aa). Residues Y26 and Y31 each carry the nitrated tyrosine modification. S46 is a binding site for heme b. At S46 the chain carries Phosphoserine. O2 is bound at residue H62. Residues H93 and K96 each coordinate heme b. Y134 bears the Nitrated tyrosine mark.

It belongs to the plant globin family. Monomer. In terms of processing, nitrated mainly at Tyr-31 and, to a lower extent, at Tyr-26 and Tyr-134, in effective nodules and particularly in hypoxic conditions; this mechanism may play a protective role in the symbiosis by buffering toxic peroxynitrite NO(2)(-). Nitration level decrease during nodule senescence. Phosphorylation at Ser-46 disrupts the molecular environment of its porphyrin ring oxygen binding pocket, thus leading to a reduced oxygen consumption and to the delivery of oxygen O(2) to symbiosomes. In terms of tissue distribution, root nodules.

The protein localises to the cytoplasm. It localises to the cytosol. The protein resides in the nucleus. Functionally, leghemoglobin that reversibly binds oxygen O(2) through a pentacoordinated heme iron. In root nodules, facilitates the diffusion of oxygen to the bacteroids while preventing the bacterial nitrogenase from being inactivated by buffering dioxygen, nitric oxide and carbon monoxide, and promoting the formation of reactive oxygen species (ROS, e.g. H(2)O(2)). This role is essential for symbiotic nitrogen fixation (SNF). The sequence is that of Leghemoglobin alpha from Phaseolus vulgaris (Kidney bean).